A 261-amino-acid polypeptide reads, in one-letter code: Cytochrome c oxidase subunit 3 (261 aa).

Residues 1–15 (MTHQTHAYHMVNPSP) are Mitochondrial matrix-facing. Residues 16-34 (WPLTGALSALLMTSGLAMW) traverse the membrane as a helical segment. At 35 to 40 (FHFNST) the chain is on the mitochondrial intermembrane side. The chain crosses the membrane as a helical span at residues 41 to 66 (ILLMIGLTTNTLTMYQWWRDVIREST). Topologically, residues 67 to 72 (FQGHHT) are mitochondrial matrix. The helical transmembrane segment at 73–105 (PTVQKGLRYGMILFIISEVLFFTGFFWAFYHSS) threads the bilayer. Topologically, residues 106-128 (LAPTPELGGCWPPTGIHPLNPLE) are mitochondrial intermembrane. A helical membrane pass occupies residues 129–152 (VPLLNTSVLLASGVSITWAHHSLM). Topologically, residues 153 to 155 (EGN) are mitochondrial matrix. The chain crosses the membrane as a helical span at residues 156 to 183 (RYPMLQALFITIALGVYFTLLQASEYYE). Residues 184 to 190 (APFTISD) lie on the Mitochondrial intermembrane side of the membrane. Residues 191–223 (GIYGSTFFVATGFHGLHVIIGSTFLIVCFFRQL) form a helical membrane-spanning segment. Residues 224 to 232 (KFHFTSNHH) lie on the Mitochondrial matrix side of the membrane. Residues 233-256 (FGFEAAAWYWHFVDVVWLFLYVSI) form a helical membrane-spanning segment. Topologically, residues 257-261 (YWWGS) are mitochondrial intermembrane.

Belongs to the cytochrome c oxidase subunit 3 family. As to quaternary structure, component of the cytochrome c oxidase (complex IV, CIV), a multisubunit enzyme composed of 14 subunits. The complex is composed of a catalytic core of 3 subunits MT-CO1, MT-CO2 and MT-CO3, encoded in the mitochondrial DNA, and 11 supernumerary subunits COX4I, COX5A, COX5B, COX6A, COX6B, COX6C, COX7A, COX7B, COX7C, COX8 and NDUFA4, which are encoded in the nuclear genome. The complex exists as a monomer or a dimer and forms supercomplexes (SCs) in the inner mitochondrial membrane with NADH-ubiquinone oxidoreductase (complex I, CI) and ubiquinol-cytochrome c oxidoreductase (cytochrome b-c1 complex, complex III, CIII), resulting in different assemblies (supercomplex SCI(1)III(2)IV(1) and megacomplex MCI(2)III(2)IV(2)).

It is found in the mitochondrion inner membrane. The enzyme catalyses 4 Fe(II)-[cytochrome c] + O2 + 8 H(+)(in) = 4 Fe(III)-[cytochrome c] + 2 H2O + 4 H(+)(out). Its function is as follows. Component of the cytochrome c oxidase, the last enzyme in the mitochondrial electron transport chain which drives oxidative phosphorylation. The respiratory chain contains 3 multisubunit complexes succinate dehydrogenase (complex II, CII), ubiquinol-cytochrome c oxidoreductase (cytochrome b-c1 complex, complex III, CIII) and cytochrome c oxidase (complex IV, CIV), that cooperate to transfer electrons derived from NADH and succinate to molecular oxygen, creating an electrochemical gradient over the inner membrane that drives transmembrane transport and the ATP synthase. Cytochrome c oxidase is the component of the respiratory chain that catalyzes the reduction of oxygen to water. Electrons originating from reduced cytochrome c in the intermembrane space (IMS) are transferred via the dinuclear copper A center (CU(A)) of subunit 2 and heme A of subunit 1 to the active site in subunit 1, a binuclear center (BNC) formed by heme A3 and copper B (CU(B)). The BNC reduces molecular oxygen to 2 water molecules using 4 electrons from cytochrome c in the IMS and 4 protons from the mitochondrial matrix. The protein is Cytochrome c oxidase subunit 3 (MT-CO3) of Raphicerus melanotis (Cape grysbok).